Consider the following 215-residue polypeptide: Endoplasmic reticulum vesicle protein 25 (215 aa).

A signal peptide spans 1–21 (MQSLITYIALVFSLFVSSAIG). Residues 22 to 184 (LHLEVPALPN…TNESTNSRVK (163 aa)) lie on the Lumenal side of the membrane. Residues 34 to 125 (PVCIRDFVQE…VRSVELDIES (92 aa)) form the GOLD domain. The helical transmembrane segment at 185–205 (WFSIVVIASLVGFGVWQIQYL) threads the bilayer. Topologically, residues 206-215 (RHYFKVKHII) are cytoplasmic.

This sequence belongs to the EMP24/GP25L family.

It localises to the endoplasmic reticulum membrane. The protein localises to the golgi apparatus membrane. Functionally, constituent of COPII-coated endoplasmic reticulum-derived transport vesicles. Required for efficient transport of a subset of secretory proteins to the Golgi. Facilitates retrograde transport from the Golgi to the endoplasmic reticulum. In Candida albicans (strain SC5314 / ATCC MYA-2876) (Yeast), this protein is Endoplasmic reticulum vesicle protein 25 (ERV25).